A 211-amino-acid chain; its full sequence is Probable septum site-determining protein MinC (211 aa).

It belongs to the MinC family. As to quaternary structure, interacts with MinD and FtsZ.

Functionally, cell division inhibitor that blocks the formation of polar Z ring septums. Rapidly oscillates between the poles of the cell to destabilize FtsZ filaments that have formed before they mature into polar Z rings. Prevents FtsZ polymerization. This Clostridium perfringens (strain 13 / Type A) protein is Probable septum site-determining protein MinC.